The following is an 842-amino-acid chain: MNESKSVVDSGLMSGKIERTTLKLSDKLKLSSNIHQGTKFSLKKSVTTVEVRKSKKRKDINNIEQASVVLQNDNAYQDNESNNSLTIQEQISRMNALQNANICEKKEDIKEDTSDVNLQVTESTSVEKSESDDVTLEEESSKKVEEQVVEEAHDNTDTVSLNVVENVQEESQVDNQVESSNISDILQPKGIEEKKLKKYEKEHEEKKGNPKKGVSNNMYSKHVKLVIEEELEDNNKQVIQTHKSRKNRSTSSVKNKITRKVLIPKKITVQELASSMSERVKDVQHMLFQMGRRDIKPTDFLDSDHASVIVEAFNHTFKLVNDGKLEEDLYADGNDKELLPRAPVVTVMGHVDHGKTSLLDAIRKSNVADGEFKGITQHIGAYQIMLDGDKRITFIDTPGHEAFTAMRACGTNVTDIVVLVVAADDGIMPQTIESINHVKAANVAMIVAVNKIDKHDANIDKITNSLLNHGVVAESLGGDVIVVPVSAKERINLDQLKSSILLMAELLELKAVYDTRASGVVIESKVDRNCGVVATLIVQKGTLKAGDIIVVGHNSYGKVRNMFNSDGRSEKVAIPSMPVKVLGLNNVPNSGTNFIVVDSEKQARELISYRQELFNAELEANAKPKMDANSILACGVVDELNVILKCDVMGSVEAICYSISKITHEDIKLNVLYKGVGNVTKSDVLLAETSNSIILAFNVKTDASVKELAKQKCIEIKHYSVIYDIIDDVKKILSSMLKPLQQEVQVGTLSIRKVFSSGSIGSVLGCYVTNGIVRKGALVKLIRNNNVIHEGKIKVLRRFKDDVKEVAAGFECGILLDYSKEIYPESDIIHILEIVEEIRVIK.

Positions 121–144 are disordered; the sequence is TESTSVEKSESDDVTLEEESSKKV. Residues 340-510 form the tr-type G domain; that stretch reads PRAPVVTVMG…LLMAELLELK (171 aa). The G1 stretch occupies residues 349-356; it reads GHVDHGKT. A GTP-binding site is contributed by 349 to 356; it reads GHVDHGKT. The tract at residues 374-378 is G2; it reads GITQH. Positions 396–399 are G3; the sequence is DTPG. GTP is bound by residues 396-400 and 450-453; these read DTPGH and NKID. The tract at residues 450–453 is G4; sequence NKID. The interval 486–488 is G5; that stretch reads SAK.

This sequence belongs to the TRAFAC class translation factor GTPase superfamily. Classic translation factor GTPase family. IF-2 subfamily.

The protein localises to the cytoplasm. Functionally, one of the essential components for the initiation of protein synthesis. Protects formylmethionyl-tRNA from spontaneous hydrolysis and promotes its binding to the 30S ribosomal subunits. Also involved in the hydrolysis of GTP during the formation of the 70S ribosomal complex. This chain is Translation initiation factor IF-2, found in Ehrlichia chaffeensis (strain ATCC CRL-10679 / Arkansas).